Reading from the N-terminus, the 813-residue chain is Histone acetyltransferase KAT2B (813 aa).

2 disordered regions span residues 1–55 (MAEA…GGSA) and 380–423 (NSTS…EAKR). Residues 32–46 (ASCGPATAVAAAGTA) are compositionally biased toward low complexity. Over residues 380–391 (NSTSHEQINGGR) the composition is skewed to polar residues. Residues 406-423 (PGEKRKMNNSHAPEEAKR) are compositionally biased toward basic and acidic residues. The N-acetyltransferase domain maps to 484 to 632 (LNQKPNKKIL…GATLMGCELN (149 aa)). Residue Glu-551 is the Proton donor/acceptor of the active site. Residues 555 to 557 (CAV), 562 to 568 (QVKGYGT), and 593 to 596 (YAIG) each bind acetyl-CoA. Residues 704 to 808 (KDPEQLYSTL…KFFFSKIKEA (105 aa)) form the Bromo domain.

The protein belongs to the acetyltransferase family. GCN5 subfamily. As to quaternary structure, interacts with BCAS3. Interacts with SIRT1. Interacts with EP300, CREBBP and DDX17. Component of a large chromatin remodeling complex, at least composed of MYSM1, KAT2B/PCAF, RBM10 and KIF11/TRIP5. Interacts with KLF1; the interaction does not acetylate KLF1 and there is no enhancement of its transactivational activity. Interacts with NFE4. Interacts with MECOM. Interacts with NR2C2 (hypophosphorylated and unsumoylated form); the interaction promotes the transactivation activity of NR2C2. Interacts with NFE4. Interacts with MECOM. Interacts with E2F1; the interaction acetylates E2F1 augmenting its DNA-binding and transcriptional activity. Interacts with NPAS2, BMAL1 and CLOCK. Interacts (unsumoylated form) with NR2C1; the interaction promotes transactivation activity. Interacts with CEBPB. Interacts with NR4A3. Interacts with TBX5. Interacts with PLK4. Interacts with RB1; this interaction leads to RB1 acetylation. Interacts with VRK1.

The protein localises to the nucleus. The protein resides in the cytoplasm. It localises to the cytoskeleton. It is found in the microtubule organizing center. Its subcellular location is the centrosome. It catalyses the reaction L-lysyl-[histone] + acetyl-CoA = N(6)-acetyl-L-lysyl-[histone] + CoA + H(+). It carries out the reaction L-lysyl-[protein] + acetyl-CoA = N(6)-acetyl-L-lysyl-[protein] + CoA + H(+). The catalysed reaction is spermidine + acetyl-CoA = N(8)-acetylspermidine + CoA + H(+). In terms of biological role, functions as a histone acetyltransferase (HAT) to promote transcriptional activation. Has significant histone acetyltransferase activity with core histones (H3 and H4), and also with nucleosome core particles. Has a a strong preference for acetylation of H3 at 'Lys-9' (H3K9ac). Also acetylates non-histone proteins, such as ACLY, MAPRE1/EB1, PLK4, RRP9/U3-55K and TBX5. Acts as a circadian transcriptional coactivator which enhances the activity of the circadian transcriptional activators: NPAS2-BMAL1 and CLOCK-BMAL1 heterodimers. Involved in heart and limb development by mediating acetylation of TBX5, acetylation regulating nucleocytoplasmic shuttling of TBX5. Acts as a negative regulator of centrosome amplification by mediating acetylation of PLK4. Acetylates RRP9/U3-55K, a core subunit of the U3 snoRNP complex, impairing pre-rRNA processing. Acetylates MAPRE1/EB1, promoting dynamic kinetochore-microtubule interactions in early mitosis. Also acetylates spermidine. This chain is Histone acetyltransferase KAT2B, found in Mus musculus (Mouse).